The sequence spans 200 residues: Recombination protein RecR (200 aa).

The C4-type zinc-finger motif lies at 58-73 (CSVCGNLTDTDPCFIC). In terms of domain architecture, Toprim spans 81–176 (DLLCVVERPR…SVTRIAHGLP (96 aa)).

This sequence belongs to the RecR family.

Functionally, may play a role in DNA repair. It seems to be involved in an RecBC-independent recombinational process of DNA repair. It may act with RecF and RecO. This is Recombination protein RecR from Pelotomaculum thermopropionicum (strain DSM 13744 / JCM 10971 / SI).